Here is a 1887-residue protein sequence, read N- to C-terminus: DNA-directed RNA polymerase II subunit RPB1 (1887 aa).

Zn(2+) contacts are provided by C67, C70, C77, H80, C107, C110, C150, and C176. Residues 156-178 form a disordered region; the sequence is MDLTKENQQPDPNKKPGHGGCGH. Residues D487, D489, and D491 each coordinate Mg(2+). The interval 825–837 is bridging helix; the sequence is PSEFYFHAMGGRE. A Glycyl lysine isopeptide (Lys-Gly) (interchain with G-Cter in ubiquitin) cross-link involves residue K1260. Disordered stretches follow at residues 1528 to 1565 and 1579 to 1887; these read TPGG…GPSM and YSPT…ESED. 3 stretches are compositionally biased toward low complexity: residues 1529–1565, 1579–1610, and 1626–1650; these read PGGP…GPSM, YSPT…PTSP, and PQST…PTVQ. Residues 1579–1585 form repeat 1; sequence YSPTSPN. The interval 1579–1881 is C-terminal domain (CTD); 32 X 7 AA approximate tandem repeats of Y-[ST]-P-[STNVAPGN]-[STGMA]-[PSTR]-[SNAGCQKTLRIMH]; it reads YSPTSPNYTA…SPAYSPSSPT (303 aa). A 2; approximate repeat occupies 1586 to 1592; it reads YTASSPG. 4 consecutive repeat copies span residues 1598–1604, 1605–1611, 1631–1637, and 1638–1644. Residues 1651-1664 are compositionally biased toward polar residues; sequence FQSSPSFAGSGSNI. Residues 1665 to 1760 are compositionally biased toward low complexity; sequence YSPGNAYSPS…GVKYSPTSPT (96 aa). 17 consecutive repeat copies span residues 1671–1677, 1678–1684, 1685–1691, 1692–1698, 1699–1705, 1706–1712, 1713–1719, 1720–1726, 1727–1733, 1740–1746, 1754–1760, 1761–1767, 1777–1783, 1784–1790, 1791–1797, 1798–1804, and 1811–1817. Residues 1776 to 1786 are compositionally biased toward polar residues; the sequence is QYTPGSPQYSP. A compositionally biased stretch (low complexity) spans 1788–1813; it reads SPKYSPTSPLYSPSSPQHSPSNQYSP. Polar residues predominate over residues 1814–1831; sequence TGSTYSATSPRYSPNMSI. One copy of the 24; approximate repeat lies at 1818–1824; the sequence is YSATSPR. 8 tandem repeats follow at residues 1825–1831, 1832–1838, 1839–1845, 1846–1852, 1853–1859, 1860–1866, 1868–1874, and 1875–1881. Residues 1832–1849 are compositionally biased toward low complexity; it reads YSPSSTKYSPTSPTYTPT. A compositionally biased stretch (polar residues) spans 1850–1859; the sequence is ARNYSPTSPM. Positions 1860 to 1881 are enriched in low complexity; that stretch reads YSPTAPSHYSPTSPAYSPSSPT.

It belongs to the RNA polymerase beta' chain family. In terms of assembly, component of the RNA polymerase II (Pol II) complex consisting of 12 subunits. The tandem 7 residues repeats in the C-terminal domain (CTD) can be highly phosphorylated. The phosphorylation activates Pol II. Phosphorylation occurs mainly at residues 'Ser-2' and 'Ser-5' of the heptapeptide repeat. The phosphorylation state is believed to result from the balanced action of site-specific CTD kinases and phosphatase, and a 'CTD code' that specifies the position of Pol II within the transcription cycle has been proposed. In terms of processing, following transcription stress, the elongating form of RNA polymerase II (RNA pol IIo) is polyubiquitinated via 'Lys-63'-linkages on Lys-1260 at DNA damage sites without leading to degradation: ubiquitination promotes RNA pol IIo backtracking to allow access by the transcription-coupled nucleotide excision repair (TC-NER) machinery. Subsequent DEF1-dependent polyubiquitination by the elongin complex via 'Lys-48'-linkages may lead to proteasome-mediated degradation; presumably at stalled RNA pol II where TC-NER has failed, to halt global transcription and enable 'last resort' DNA repair pathways.

Its subcellular location is the nucleus. It catalyses the reaction RNA(n) + a ribonucleoside 5'-triphosphate = RNA(n+1) + diphosphate. In terms of biological role, DNA-dependent RNA polymerase catalyzes the transcription of DNA into RNA using the four ribonucleoside triphosphates as substrates. Largest and catalytic component of RNA polymerase II which synthesizes mRNA precursors and many functional non-coding RNAs. Forms the polymerase active center together with the second largest subunit. Pol II is the central component of the basal RNA polymerase II transcription machinery. It is composed of mobile elements that move relative to each other. RPB1 is part of the core element with the central large cleft, the clamp element that moves to open and close the cleft and the jaws that are thought to grab the incoming DNA template. At the start of transcription, a single-stranded DNA template strand of the promoter is positioned within the central active site cleft of Pol II. A bridging helix emanates from RPB1 and crosses the cleft near the catalytic site and is thought to promote translocation of Pol II by acting as a ratchet that moves the RNA-DNA hybrid through the active site by switching from straight to bent conformations at each step of nucleotide addition. During transcription elongation, Pol II moves on the template as the transcript elongates. Elongation is influenced by the phosphorylation status of the C-terminal domain (CTD) of Pol II largest subunit (RPB1), which serves as a platform for assembly of factors that regulate transcription initiation, elongation, termination and mRNA processing. This chain is DNA-directed RNA polymerase II subunit RPB1, found in Drosophila melanogaster (Fruit fly).